Reading from the N-terminus, the 396-residue chain is NADH-quinone oxidoreductase subunit D (396 aa).

It belongs to the complex I 49 kDa subunit family. As to quaternary structure, NDH-1 is composed of 14 different subunits. Subunits NuoB, C, D, E, F, and G constitute the peripheral sector of the complex.

It is found in the cell inner membrane. It catalyses the reaction a quinone + NADH + 5 H(+)(in) = a quinol + NAD(+) + 4 H(+)(out). Its function is as follows. NDH-1 shuttles electrons from NADH, via FMN and iron-sulfur (Fe-S) centers, to quinones in the respiratory chain. The immediate electron acceptor for the enzyme in this species is believed to be ubiquinone. Couples the redox reaction to proton translocation (for every two electrons transferred, four hydrogen ions are translocated across the cytoplasmic membrane), and thus conserves the redox energy in a proton gradient. The protein is NADH-quinone oxidoreductase subunit D of Bartonella bacilliformis (strain ATCC 35685 / KC583 / Herrer 020/F12,63).